We begin with the raw amino-acid sequence, 448 residues long: MKHEKGRSFYIHTFGCQMNQADSAIITAILMDGGFRVAGSQEDADIVILNTCAVRENAVERITHQLQFLRGAKRRKKSLLVGVAGCVPQHLKREMLEMFPVIDFLAGPDTYRNLPALIGDAEEGKRPAALEFRIEETYAGIDPLREVGVGAFVPVTRGCNNMCAFCVVPFTRGRERSQPFSAVMDEVRRVVEKGYGEITLLGQNVNSYADPEEGRDFASLLRAVSREAPGCRIRFTTSHPKDISPDLVDAIADSPNICNHVHLPVQSGSSRMLHRMNRGHGIDEYLETVALLRRRIPGVSLTTDLIAGFCGEEDEDHEATLALLREVRYDNAFMFYYSPRFGTAAWKTLADTVPLAVKKQRLQEIIDLQLSISAECLQEAVGSVVDVLAESESRRSTEQLMGRTGTNRAVVFDRGGARPGDRVSVLISKASSATLTGVNQGVLPAFYS.

The region spanning 7–123 is the MTTase N-terminal domain; sequence RSFYIHTFGC…LPALIGDAEE (117 aa). Positions 16, 52, 86, 159, 163, and 166 each coordinate [4Fe-4S] cluster. Residues 145–375 enclose the Radical SAM core domain; the sequence is REVGVGAFVP…IDLQLSISAE (231 aa). Residues 378–441 enclose the TRAM domain; sequence QEAVGSVVDV…SATLTGVNQG (64 aa).

The protein belongs to the methylthiotransferase family. MiaB subfamily. Monomer. It depends on [4Fe-4S] cluster as a cofactor.

The protein resides in the cytoplasm. The enzyme catalyses N(6)-dimethylallyladenosine(37) in tRNA + (sulfur carrier)-SH + AH2 + 2 S-adenosyl-L-methionine = 2-methylsulfanyl-N(6)-dimethylallyladenosine(37) in tRNA + (sulfur carrier)-H + 5'-deoxyadenosine + L-methionine + A + S-adenosyl-L-homocysteine + 2 H(+). Functionally, catalyzes the methylthiolation of N6-(dimethylallyl)adenosine (i(6)A), leading to the formation of 2-methylthio-N6-(dimethylallyl)adenosine (ms(2)i(6)A) at position 37 in tRNAs that read codons beginning with uridine. The polypeptide is tRNA-2-methylthio-N(6)-dimethylallyladenosine synthase (Chlorobium phaeovibrioides (strain DSM 265 / 1930) (Prosthecochloris vibrioformis (strain DSM 265))).